A 464-amino-acid polypeptide reads, in one-letter code: Sensor protein IrlS (464 aa).

Residues 1 to 13 (MIRRLLPRTLRAR) are Periplasmic-facing. The chain crosses the membrane as a helical span at residues 14–34 (LTALIILSTAATLALSGVALY). The Cytoplasmic segment spans residues 35–166 (SALHNRLVGM…DHALLRAYAY (132 aa)). A helical transmembrane segment spans residues 167 to 187 (TVVVIEVLAVVLTAALAYGIA). The 54-residue stretch at 188–241 (MLGLSPLRRLVARAEQMSSSRLAQPLPELDTSGELKEMEHAFNAMLKRLDESFV) folds into the HAMP domain. Topologically, residues 188-464 (MLGLSPLRRL…FWLKFPAHAA (277 aa)) are periplasmic. Positions 249–463 (NLAHDMRTPL…TFWLKFPAHA (215 aa)) constitute a Histidine kinase domain. Histidine 252 is subject to Phosphohistidine; by autocatalysis.

The protein resides in the cell inner membrane. It catalyses the reaction ATP + protein L-histidine = ADP + protein N-phospho-L-histidine.. In terms of biological role, member of the two-component regulatory system IrlR/IrlS. May be involved in invasion of eukaryotic cells and heavy-metal resistance. Probably activates IrlR by phosphorylation. The polypeptide is Sensor protein IrlS (irlS) (Burkholderia pseudomallei (strain K96243)).